A 72-amino-acid chain; its full sequence is Cell division protein ZapB (72 aa).

Positions 1–71 (MSLEILDQLE…IRSLLGKFDN (71 aa)) form a coiled coil.

It belongs to the ZapB family. As to quaternary structure, homodimer. The ends of the coiled-coil dimer bind to each other, forming polymers. Interacts with FtsZ.

It is found in the cytoplasm. In terms of biological role, non-essential, abundant cell division factor that is required for proper Z-ring formation. It is recruited early to the divisome by direct interaction with FtsZ, stimulating Z-ring assembly and thereby promoting cell division earlier in the cell cycle. Its recruitment to the Z-ring requires functional FtsA or ZipA. The protein is Cell division protein ZapB of Haemophilus influenzae (strain 86-028NP).